A 298-amino-acid polypeptide reads, in one-letter code: Enoyl-CoA hydratase ACTT6 (298 aa).

The protein belongs to the enoyl-CoA hydratase/isomerase family.

The protein operates within mycotoxin biosynthesis. Functionally, enoyl-CoA hydratase; part of the gene clusters that mediate the biosynthesis of the host-selective toxins (HSTs) ACT-toxins responsible for brown spot of tangerine disease by the tangerine pathotype which affects tangerines and mandarins. ACT-toxins consist of three moieties, 9,10-epoxy-8-hydroxy-9-methyl-decatrienoic acid (EDA), valine and a polyketide. ACT-toxin I is toxic to both citrus and pear; toxin II the 5''-deoxy derivative of ACT-toxin I, is highly toxic to pear and slightly toxic to citrus. On cellular level, ACT-toxins affect plasma membrane of susceptible cells and cause a sudden increase in loss of K(+) after a few minutes of toxin treatment. The acyl-CoA ligase ACTT1, the hydrolase ACTT2, the enoyl-CoA hydratases ACTT3 and ACTT6, and the acyl-CoA synthetase ACTT5 are all involved in the biosynthesis of the AK-, AF- and ACT-toxin common 9,10-epoxy-8-hydroxy-9-methyl-decatrienoic acid (EDA) structural moiety. The exact role of each enzyme, and of additional enzymes identified within the AF-toxin clusters have still to be determined. On the other hand, ACTTS1 to ACTTS4 are specific to the tangerine pathotype. The function of ACTTS3 is to elongate the polyketide chain portion of ACT-toxin that is unique to this toxin. The enoyl-reductase ACTTS2 might complement the missing enoyl-reductase (ER) domain in ACTTS3 in the synthesis of the polyketide portion of ACT-toxin. The roles of the nonribosomal peptide synthetases-related proteins ACTTS1 and ACTTS4 have also still not been elucidated. The protein is Enoyl-CoA hydratase ACTT6 of Alternaria alternata (Alternaria rot fungus).